A 506-amino-acid chain; its full sequence is NAD(P)H-quinone oxidoreductase subunit 2, chloroplastic (506 aa).

Transmembrane regions (helical) follow at residues 15–35 (LIPEGIVACTILLVLLLDLVY), 39–59 (CHAWLAWVAMAGLSLASVLLG), 84–104 (LSLVFRAIIAMSCVLCILLSI), 113–133 (APSEFLVLIATASLGGMLVAG), 137–157 (LLMMFVSLETLGLASYLLTGY), 172–192 (LLVGAASSGLFLYGISWMYGI), 217–237 (CALALVLMTVGVGFKVAAAPF), 249–269 (PTPVVAFLSVGSKAAGFILAV), 283–303 (WHLIFTILSILSMIVGNFIAV), 339–359 (IVYLLIYLFMNLGAFACVILF), 382–402 (ALCLSLCLLSLGGIPPLAGFF), 418–438 (SLVWVGLITSVVSIYYYLSVV), and 471–491 (VGIFVCVLGSILVGVAGNSMV).

Belongs to the complex I subunit 2 family. As to quaternary structure, NDH is composed of at least 16 different subunits, 5 of which are encoded in the nucleus.

Its subcellular location is the plastid. The protein resides in the chloroplast thylakoid membrane. The enzyme catalyses a plastoquinone + NADH + (n+1) H(+)(in) = a plastoquinol + NAD(+) + n H(+)(out). It carries out the reaction a plastoquinone + NADPH + (n+1) H(+)(in) = a plastoquinol + NADP(+) + n H(+)(out). Its function is as follows. NDH shuttles electrons from NAD(P)H:plastoquinone, via FMN and iron-sulfur (Fe-S) centers, to quinones in the photosynthetic chain and possibly in a chloroplast respiratory chain. The immediate electron acceptor for the enzyme in this species is believed to be plastoquinone. Couples the redox reaction to proton translocation, and thus conserves the redox energy in a proton gradient. The protein is NAD(P)H-quinone oxidoreductase subunit 2, chloroplastic of Nephroselmis olivacea (Green alga).